Here is a 177-residue protein sequence, read N- to C-terminus: Putative pre-16S rRNA nuclease (177 aa).

The interval methionine 1 to arginine 20 is disordered.

Belongs to the YqgF nuclease family.

It is found in the cytoplasm. Functionally, could be a nuclease involved in processing of the 5'-end of pre-16S rRNA. The sequence is that of Putative pre-16S rRNA nuclease from Rhodococcus erythropolis (strain PR4 / NBRC 100887).